A 464-amino-acid chain; its full sequence is Heterogeneous nuclear ribonucleoprotein K (464 aa).

Met-1 is modified (N-acetylmethionine). The tract at residues 1 to 37 is disordered; it reads METEQPEETFPNTETNGEFGKRPAEDMEEEQAFKRSR. A necessary for interaction with DDX1 region spans residues 1–276; it reads METEQPEETF…GRGGRPMPPS (276 aa). The segment covering 19-37 has biased composition (basic and acidic residues); that stretch reads FGKRPAEDMEEEQAFKRSR. Lys-34 carries the N6-acetyllysine; alternate modification. Lys-34 participates in a covalent cross-link: Glycyl lysine isopeptide (Lys-Gly) (interchain with G-Cter in SUMO1); alternate. Residue Lys-34 forms a Glycyl lysine isopeptide (Lys-Gly) (interchain with G-Cter in SUMO2); alternate linkage. Residue Ser-36 is modified to Phosphoserine. At Thr-39 the chain carries Phosphothreonine. In terms of domain architecture, KH 1 spans 42 to 104; sequence MVELRILLQS…ETIGEILKKI (63 aa). Residues Lys-52 and Lys-60 each participate in a glycyl lysine isopeptide (Lys-Gly) (interchain with G-Cter in SUMO2) cross-link. A run of 2 repeats spans residues 54 to 76 and 59 to 62. The 2 X 22 AA approximate repeats stretch occupies residues 54-421; it reads AGAVIGKGGK…QIRHESGASI (368 aa). The 5 X 4 AA repeats of G-X-G-G stretch occupies residues 59-407; the sequence is GKGGKNIKAL…LAGSIIGKGG (349 aa). Phosphoserine occurs at positions 75 and 116. One can recognise a KH 2 domain in the interval 144-209; sequence DCELRLLIHQ…DRVVECIKII (66 aa). Lys-163 is covalently cross-linked (Glycyl lysine isopeptide (Lys-Gly) (interchain with G-Cter in SUMO1); alternate). Lys-163 participates in a covalent cross-link: Glycyl lysine isopeptide (Lys-Gly) (interchain with G-Cter in SUMO2); alternate. At Lys-198 the chain carries N6-acetyllysine. The segment at 209–337 is interaction with ZIK1; sequence ILDLISESPI…RPGDRYDGMV (129 aa). Residues Ser-214 and Ser-216 each carry the phosphoserine modification. Lys-219 participates in a covalent cross-link: Glycyl lysine isopeptide (Lys-Gly) (interchain with G-Cter in SUMO2); alternate. The residue at position 219 (Lys-219) is an N6-succinyllysine; alternate. Residues 236 to 273 are RNA-binding RGG-box; sequence YGGFTMMFDDRRGRPVGFPMRGRGGFDRMPPGRGGRPM. Tandem repeats lie at residues 245-250, 257-260, and 267-270. A 2 X 6 AA approximate repeats region spans residues 245 to 329; the sequence is DRRGRPVGFP…LMAYDRRGRP (85 aa). Positions 250–329 are disordered; the sequence is PVGFPMRGRG…LMAYDRRGRP (80 aa). A compositionally biased stretch (low complexity) spans 252–266; that stretch reads GFPMRGRGGFDRMPP. Residues 276–285 show a composition bias toward basic and acidic residues; sequence SRRDYDDMSP. Position 284 is a phosphoserine (Ser-284). The stretch at 295 to 298 is one 3-4 repeat; it reads GRGG. Arg-316 carries the omega-N-methylarginine modification. The stretch at 324-329 is one 2-2 repeat; that stretch reads DRRGRP. Arg-377 carries the omega-N-methylarginine modification. Ser-379 carries the phosphoserine modification. Tyr-380 is subject to Phosphotyrosine. The region spanning 387–451 is the KH 3 domain; the sequence is IITTQVTIPK…DQIQNAQYLL (65 aa). Tandem repeats lie at residues 399–421 and 404–407. The residue at position 405 (Lys-405) is an N6-acetyllysine; alternate. Residue Lys-405 forms a Glycyl lysine isopeptide (Lys-Gly) (interchain with G-Cter in SUMO2); alternate linkage. Ser-420 is subject to Phosphoserine. Lys-422 participates in a covalent cross-link: Glycyl lysine isopeptide (Lys-Gly) (interchain with G-Cter in SUMO1); alternate. A Glycyl lysine isopeptide (Lys-Gly) (interchain with G-Cter in SUMO2); alternate cross-link involves residue Lys-422. Residue Lys-422 forms a Glycyl lysine isopeptide (Lys-Gly) (interchain with G-Cter in SUMO); alternate linkage.

Identified in the spliceosome C complex. Interacts with ANKRD28, RBM42 and ZIK1. Interacts with DDX1. Interacts with MDM2; this interaction leads to ubiquitination and proteasomal degradation. Interacts with p53/TP53. Interacts with BRDT. Interacts with IVNS1ABP. Interacts with PPIA/CYPA. Part of a transcription inhibitory ribonucleoprotein complex composed at least of the circular RNA circZNF827, ZNF827 and HNRNPL. In terms of processing, sumoylated by CBX4. Sumoylation is increased upon DNA damage, such as that produced by doxorubicin, etoposide, UV light and camptothecin, due to enhanced CBX4 phosphorylation by HIPK2 under these conditions. Ubiquitinated by MDM2. Doxorubicin treatment does not affect monoubiquitination, but slightly decreases HNRNPK poly-ubiquitination. Post-translationally, O-glycosylated (O-GlcNAcylated), in a cell cycle-dependent manner.

It localises to the cytoplasm. It is found in the nucleus. The protein resides in the nucleoplasm. Its subcellular location is the cell projection. The protein localises to the podosome. Its function is as follows. One of the major pre-mRNA-binding proteins. Binds tenaciously to poly(C) sequences. Likely to play a role in the nuclear metabolism of hnRNAs, particularly for pre-mRNAs that contain cytidine-rich sequences. Can also bind poly(C) single-stranded DNA. Plays an important role in p53/TP53 response to DNA damage, acting at the level of both transcription activation and repression. When sumoylated, acts as a transcriptional coactivator of p53/TP53, playing a role in p21/CDKN1A and 14-3-3 sigma/SFN induction. As far as transcription repression is concerned, acts by interacting with long intergenic RNA p21 (lincRNA-p21), a non-coding RNA induced by p53/TP53. This interaction is necessary for the induction of apoptosis, but not cell cycle arrest. As part of a ribonucleoprotein complex composed at least of ZNF827, HNRNPL and the circular RNA circZNF827 that nucleates the complex on chromatin, may negatively regulate the transcription of genes involved in neuronal differentiation. The protein is Heterogeneous nuclear ribonucleoprotein K (HNRNPK) of Bos taurus (Bovine).